The sequence spans 1009 residues: C2 domain-containing protein aex-1 (1009 aa).

The region spanning 812–945 (NAPHVDVHIS…ASEEKPTQRL (134 aa)) is the C2 domain.

It belongs to the unc-13 family. Expressed in intestine, body wall muscles and some amphid neurons.

Its function is as follows. Involved in retrograde signaling from post-synaptic cells to pre-synaptic neurons, probably by regulating vesicle exocytosis in post-synaptic cells. Acts in muscles, to regulate the localization of synaptic vesicle fusion protein unc-13 likely during vesicle exocytosis and thus regulate retrograde signaling at the neuromuscular junction (NMJ). Regulates anterior body muscle contractions (aBOC) and the expulsion steps during the defecation motor program (DMP). Probably by regulating DMP, plays a homeostatic role in the uptake of triglycerides. Regulates locomotion. In Caenorhabditis elegans, this protein is C2 domain-containing protein aex-1.